The primary structure comprises 479 residues: Probable phosphatidate cytidylyltransferase (479 aa).

The span at 1–28 shows a compositional bias: basic and acidic residues; it reads MRTDNIRNRKEQLKKQEKKDFDSSKDEE. The disordered stretch occupies residues 1-71; sequence MRTDNIRNRK…NNNNNNNNIK (71 aa). Over 1-108 the chain is Cytoplasmic; the sequence is MRTDNIRNRK…LAIRSVMGAF (108 aa). Positions 53–69 are enriched in low complexity; it reads NKNIINQKTNNNNNNNN. Residues 109 to 129 form a helical membrane-spanning segment; it reads MIGFFTIVLSTDHFIVALFVI. The Extracellular segment spans residues 130–159; that stretch reads ALQLLVFKEMIALRYIEAKEKKIPHFRTLN. A helical membrane pass occupies residues 160 to 180; it reads WFFLFTSFFFFYAKPILITLA. Residues 181–192 lie on the Cytoplasmic side of the membrane; sequence NYYPDIFQHFVR. A helical membrane pass occupies residues 193–213; sequence YHLWHSFSLYCIGFVLFILTL. Residues 214–240 lie on the Extracellular side of the membrane; sequence RKGVYRYQFSQLTWTLMILMMVVVQSN. The helical transmembrane segment at 241–261 threads the bilayer; the sequence is FLISNIYQGLIWFILPVSIIV. Residues 262 to 293 lie on the Cytoplasmic side of the membrane; it reads CNDIFAYFNGFFLGKKFINRPLMKISPNKTWE. The chain crosses the membrane as a helical span at residues 294–314; it reads GFIGATGWTLLFAYYFCGFLL. The Extracellular portion of the chain corresponds to 315 to 375; it reads KYDWIVCPKG…FTYIPIQFHA (61 aa). The helical transmembrane segment at 376-396 threads the bilayer; it reads LVLALFGSLIAPFGGFFASGI. Topologically, residues 397–479 are cytoplasmic; sequence KRAYKVKDFD…IEFTTGTITA (83 aa).

It belongs to the CDS family.

The protein localises to the membrane. The enzyme catalyses a 1,2-diacyl-sn-glycero-3-phosphate + CTP + H(+) = a CDP-1,2-diacyl-sn-glycerol + diphosphate. The protein operates within phospholipid metabolism; CDP-diacylglycerol biosynthesis; CDP-diacylglycerol from sn-glycerol 3-phosphate: step 3/3. The polypeptide is Probable phosphatidate cytidylyltransferase (cdsA) (Dictyostelium discoideum (Social amoeba)).